Here is a 944-residue protein sequence, read N- to C-terminus: Protocadherin gamma-C5 (944 aa).

Positions 1-29 (MGPKTLPQLAGKWQVLCMLSLCCWGWVSG) are cleaved as a signal peptide. 6 Cadherin domains span residues 30 to 133 (QLRY…SPSF), 134 to 242 (ATPE…APTF), 243 to 350 (QSSV…APEV), 351 to 454 (LLAS…APRF), 455 to 564 (NQQL…APAV), and 571 to 677 (WEHS…MPKS). The Extracellular portion of the chain corresponds to 30–693 (QLRYSVVEES…PPERSDLTLY (664 aa)). N-linked (GlcNAc...) asparagine glycans are attached at residues N265, N443, and N547. A helical membrane pass occupies residues 694–714 (LIVALATVSLLSLVTFTFLSA). At 715-944 (KCLQGNADGD…KKKSGKKEKK (230 aa)) the chain is on the cytoplasmic side. 3 disordered regions span residues 722–747 (DGDGGGGQCCRRQDSPSPDFYKQSSP), 812–853 (SNTL…WPNN), and 914–944 (ATLTNAAGKRDGKAPAGGNGNKKKSGKKEKK). A compositionally biased stretch (polar residues) spans 820 to 853 (QQAPPNTDWRFSQAQRPGTSGSQNGDDTGTWPNN). Over residues 934 to 944 (NKKKSGKKEKK) the composition is skewed to basic residues.

It is found in the cell membrane. Potential calcium-dependent cell-adhesion protein. May be involved in the establishment and maintenance of specific neuronal connections in the brain. In Homo sapiens (Human), this protein is Protocadherin gamma-C5 (PCDHGC5).